A 116-amino-acid polypeptide reads, in one-letter code: MLFKQAILVATTLTTLAVATPVVDVRRRTDPASSCSTGTLNCCNSSGTVEDKTIAGLLGILNIVVSDITALVGITCTPITVVGAGGTSCTSQTLCCDNNNFSGLITLGCIPININL.

The first 19 residues, 1–19, serve as a signal peptide directing secretion; the sequence is MLFKQAILVATTLTTLAVA. Intrachain disulfides connect Cys-35–Cys-95, Cys-42–Cys-89, Cys-43–Cys-76, and Cys-96–Cys-109. N-linked (GlcNAc...) asparagine glycans are attached at residues Asn-44 and Asn-100.

Belongs to the fungal hydrophobin family. As to quaternary structure, self-assembles to form functional amyloid fibrils called rodlets. Self-assembly into fibrillar rodlets occurs spontaneously at hydrophobic:hydrophilic interfaces and the rodlets further associate laterally to form amphipathic monolayers.

The protein resides in the secreted. It is found in the cell wall. Functionally, aerial growth, conidiation, and dispersal of filamentous fungi in the environment rely upon a capability of their secreting small amphipathic proteins called hydrophobins (HPBs) with low sequence identity. Class I can self-assemble into an outermost layer of rodlet bundles on aerial cell surfaces, conferring cellular hydrophobicity that supports fungal growth, development and dispersal; whereas Class II form highly ordered films at water-air interfaces through intermolecular interactions but contribute nothing to the rodlet structure. This chain is Class I hydrophobin 1, found in Pleurotus ostreatus (strain PC15) (Oyster mushroom).